A 1050-amino-acid polypeptide reads, in one-letter code: Zinc finger and BTB domain-containing protein 11 (1050 aa).

Positions 143–156 (LDSGEESNESEDDL) are enriched in acidic residues. The segment at 143–173 (LDSGEESNESEDDLSNFTSPPSTASKSSKKK) is disordered. Positions 157–168 (SNFTSPPSTASK) are enriched in low complexity. The BTB domain maps to 214–282 (CDVTLLIEGE…AYTSVLSFDF (69 aa)). Disordered stretches follow at residues 373-514 (AEQN…EGGY) and 543-563 (LVQR…STEE). A compositionally biased stretch (low complexity) spans 378 to 399 (EPEQQPAPQASPEAEASVSPVE). Composition is skewed to basic and acidic residues over residues 478–501 (SKDE…DTYR) and 553–563 (PKRDAKESTEE). 2 consecutive C2H2-type zinc fingers follow at residues 566-588 (HKCG…TLKH) and 594-616 (YKCP…LIRH). Positions 617-641 (TRKEAPTSSSSNSTSTEASGGSSEK) are disordered. Low complexity predominate over residues 623–638 (TSSSSNSTSTEASGGS). 10 C2H2-type zinc fingers span residues 648–670 (FICS…MLKH), 676–698 (HACQ…QSLH), 704–726 (FQCE…MSIH), 732–754 (YFCS…LKKH), 763–785 (YHCT…MNKH), 791–813 (FQCQ…VKSH), 819–843 (YRCN…KATH), 855–877 (RVCD…MNNH), 883–905 (FECL…VRTH), and 911–934 (YVCP…TKFH).

It is found in the nucleus. The protein localises to the nucleolus. Its function is as follows. May be involved in transcriptional regulation. This is Zinc finger and BTB domain-containing protein 11 from Mus musculus (Mouse).